A 475-amino-acid polypeptide reads, in one-letter code: 3-isopropylmalate dehydratase large subunit (475 aa).

[4Fe-4S] cluster contacts are provided by cysteine 353, cysteine 414, and cysteine 417.

This sequence belongs to the aconitase/IPM isomerase family. LeuC type 1 subfamily. In terms of assembly, heterodimer of LeuC and LeuD. The cofactor is [4Fe-4S] cluster.

The catalysed reaction is (2R,3S)-3-isopropylmalate = (2S)-2-isopropylmalate. The protein operates within amino-acid biosynthesis; L-leucine biosynthesis; L-leucine from 3-methyl-2-oxobutanoate: step 2/4. Its function is as follows. Catalyzes the isomerization between 2-isopropylmalate and 3-isopropylmalate, via the formation of 2-isopropylmaleate. The protein is 3-isopropylmalate dehydratase large subunit of Marinomonas sp. (strain MWYL1).